The sequence spans 250 residues: Vacuolar iron transporter 1 (250 aa).

Over 1–37 (MSSEEDKITRISIEPEKQTLLDHHTEKHFTAGEIVRD) the chain is Cytoplasmic. Residues 38-58 (IIIGVSDGLTVPFALAAGLSG) form a helical membrane-spanning segment. At 59 to 64 (ANASSS) the chain is on the vacuolar side. Residues 65–85 (IVLTAGIAEVAAGAISMGLGG) traverse the membrane as a helical segment. Topologically, residues 86 to 169 (YLAAKSEEDH…PDPKRALQSA (84 aa)) are cytoplasmic. The segment at 91–166 (SEEDHYAREM…LEKPDPKRAL (76 aa)) is cytoplasmic metal binding domain (MBD). Fe cation is bound by residues E103, E106, E114, E117, M150, and E154. A helical membrane pass occupies residues 170-190 (FTIAIAYVLGGFIPLLPYMLI). At 191-192 (PH) the chain is on the vacuolar side. A helical transmembrane segment spans residues 193-213 (AMDAVVASVVITLFALFIFGY). Residues 214-227 (AKGHFTGSKPLRSA) lie on the Cytoplasmic side of the membrane. The helical transmembrane segment at 228–248 (FETAFIGAIASAAAFCLAKVV) threads the bilayer. Residues 249–250 (QH) lie on the Vacuolar side of the membrane.

This sequence belongs to the CCC1 family. In terms of assembly, homodimer. The dimeric interaction is mediated by both the transmembrane domains (TMDs) and the cytoplasmic metal binding domain (MBD). Highly expressed in developing embryo and seed. Expressed in young seedlings, predominantly in the vasculature.

The protein localises to the vacuole membrane. The catalysed reaction is Fe(2+)(in) = Fe(2+)(out). Vacuolar iron transporter involved in the transfer of iron ions from the cytosol to the vacuole for intracellular iron storage. Involved in regulation of cellular iron homeostasis. Vacuolar iron storage is required for seed embryo and seedling development. The sequence is that of Vacuolar iron transporter 1 from Arabidopsis thaliana (Mouse-ear cress).